Reading from the N-terminus, the 475-residue chain is Ubiquitin carboxyl-terminal hydrolase calypso (475 aa).

A UCH catalytic domain is found at Gly-44 to Pro-275. Cys-130 (nucleophile) is an active-site residue. Catalysis depends on His-212, which acts as the Proton donor. Positions Ala-333 to Arg-360 form a coiled coil. The region spanning Asn-374 to Pro-402 is the ULD domain. Residues Lys-404–Lys-475 form a positively charged C-terminal tail required for binding nucleosomes region. Residues Ala-411 to Lys-475 form a disordered region. The segment covering Asn-419–Thr-460 has biased composition (low complexity). A compositionally biased stretch (basic residues) spans Pro-461 to Lys-475.

Belongs to the peptidase C12 family. BAP1 subfamily. As to quaternary structure, catalytic component of the polycomb repressive deubiquitinase (PR-DUB) complex, at least composed of caly/calypso, Asx and sba (MBD5/6 homolog). The PR-DUB complex associates with nucleosomes to mediate deubiquitination of histone H2AK118ub1 substrates; the association requires the positively charged C-terminal tail of caly, probably due to direct binding of DNA. Interacts (via ULD domain) with Asx (via DEUBAD domain); the interaction produces a stable heterodimer with a composite binding site for ubiquitin. Homodimerizes (via coiled-coil hinge-region between the UCH and ULD domains) to mediate assembly of 2 copies of the caly-Asx heterodimer into a bisymmetric tetramer; dimerization enhances PR-DUB association with nucleosomes.

Its subcellular location is the nucleus. The catalysed reaction is Thiol-dependent hydrolysis of ester, thioester, amide, peptide and isopeptide bonds formed by the C-terminal Gly of ubiquitin (a 76-residue protein attached to proteins as an intracellular targeting signal).. Functionally, catalytic component of the polycomb repressive deubiquitinase (PR-DUB) complex, a complex that specifically mediates deubiquitination of histone H2A monoubiquitinated at 'Lys-119' (H2AK118ub1). Mediates bisymmetric organization of the PR-DUB complex and is involved in association with nucleosomes to mediate deubiquitination. Does not deubiquitinate monoubiquitinated histone H2B. Required to maintain the transcriptionally repressive state of homeotic genes throughout development. The PR-DUB complex has weak or no activity toward 'Lys-48'- and 'Lys-63'-linked polyubiquitin chains. Polycomb group (PcG) protein. This Drosophila persimilis (Fruit fly) protein is Ubiquitin carboxyl-terminal hydrolase calypso.